Consider the following 295-residue polypeptide: Ribosomal protein L11 methyltransferase (295 aa).

S-adenosyl-L-methionine-binding residues include Thr138, Gly161, Asp183, and Asn230.

It belongs to the methyltransferase superfamily. PrmA family.

The protein localises to the cytoplasm. The catalysed reaction is L-lysyl-[protein] + 3 S-adenosyl-L-methionine = N(6),N(6),N(6)-trimethyl-L-lysyl-[protein] + 3 S-adenosyl-L-homocysteine + 3 H(+). In terms of biological role, methylates ribosomal protein L11. The sequence is that of Ribosomal protein L11 methyltransferase from Rhodopseudomonas palustris (strain BisB5).